We begin with the raw amino-acid sequence, 261 residues long: Anamorsin homolog (261 aa).

Residues 4 to 134 (VQENNQVLYI…EIGSAAKLSL (131 aa)) form an N-terminal SAM-like domain region. The interval 134-173 (LGGGANKAKVAAVWKLDVDDDGEAEERIDEDELLDEEDKV) is linker. [2Fe-2S] cluster contacts are provided by C183, C192, C195, and C197. The tract at residues 183–197 (CGTTGKRKACKDCSC) is fe-S binding site A. [4Fe-4S] cluster-binding residues include C222, C225, C233, and C236. 2 consecutive short sequence motifs (cx2C motif) follow at residues 222–225 (CGSC) and 233–236 (CATC). Residues 222–236 (CGSCYLGDAFRCATC) form a fe-S binding site B region.

This sequence belongs to the anamorsin family. Monomer. The cofactor is [2Fe-2S] cluster. [4Fe-4S] cluster serves as cofactor.

The protein localises to the cytoplasm. Its subcellular location is the mitochondrion intermembrane space. In terms of biological role, component of the cytosolic iron-sulfur (Fe-S) protein assembly (CIA) machinery. Required for the maturation of extramitochondrial Fe-S proteins. Part of an electron transfer chain functioning in an early step of cytosolic Fe-S biogenesis, facilitating the de novo assembly of a [4Fe-4S] cluster on the cytosolic Fe-S scaffold complex. Electrons are transferred from NADPH via a FAD- and FMN-containing diflavin oxidoreductase. Together with the diflavin oxidoreductase, also required for the assembly of the diferric tyrosyl radical cofactor of ribonucleotide reductase (RNR), probably by providing electrons for reduction during radical cofactor maturation in the catalytic small subunit. In Culex quinquefasciatus (Southern house mosquito), this protein is Anamorsin homolog.